Consider the following 487-residue polypeptide: Photosystem II CP43 reaction center protein (487 aa).

A propeptide spanning residues 1 to 28 is cleaved from the precursor; it reads MKVFVLGWLLKINLMKTLYSQRRFYHVE. 5 helical membrane-spanning segments follow: residues 83 to 107, 148 to 169, 192 to 214, 269 to 289, and 305 to 326; these read LFEV…PHLA, LIGP…RDKN, KSLF…RFVS, KPFA…LSYS, and WYNN…ASQA. [CaMn4O5] cluster is bound at residue Glu-381. A helical membrane pass occupies residues 461–485; it reads RARAAAAGFEKGINRENEPVLSMRP.

It belongs to the PsbB/PsbC family. PsbC subfamily. As to quaternary structure, PSII is composed of 1 copy each of membrane proteins PsbA, PsbB, PsbC, PsbD, PsbE, PsbF, PsbH, PsbI, PsbJ, PsbK, PsbL, PsbM, PsbT, PsbX, PsbY, PsbZ, Psb30/Ycf12, at least 3 peripheral proteins of the oxygen-evolving complex and a large number of cofactors. It forms dimeric complexes. Binds multiple chlorophylls and provides some of the ligands for the Ca-4Mn-5O cluster of the oxygen-evolving complex. It may also provide a ligand for a Cl- that is required for oxygen evolution. PSII binds additional chlorophylls, carotenoids and specific lipids. is required as a cofactor.

It is found in the plastid. It localises to the chloroplast thylakoid membrane. Functionally, one of the components of the core complex of photosystem II (PSII). It binds chlorophyll and helps catalyze the primary light-induced photochemical processes of PSII. PSII is a light-driven water:plastoquinone oxidoreductase, using light energy to abstract electrons from H(2)O, generating O(2) and a proton gradient subsequently used for ATP formation. This chain is Photosystem II CP43 reaction center protein, found in Porphyra purpurea (Red seaweed).